Here is a 265-residue protein sequence, read N- to C-terminus: Eukaryotic translation initiation factor 3 subunit J (265 aa).

A disordered region spans residues 1 to 71 (MSWDDEAING…KESSADRALL (71 aa)). Positions 23–32 (WDAEIGDDEP) are enriched in acidic residues. The segment covering 42 to 71 (EEKKPAPKPKKEQPKKVKKGKESSADRALL) has biased composition (basic and acidic residues). Ser65 is subject to Phosphoserine. At Thr75 the chain carries Phosphothreonine. Ser92 bears the Phosphoserine mark. The disordered stretch occupies residues 219-265 (VRGGTATGGAGKKKVKGKTNLGGAFKKDQDFDLDGPDDFEFGDDDFM). Arg220 is modified (omega-N-methylarginine). Over residues 249–265 (FDLDGPDDFEFGDDDFM) the composition is skewed to acidic residues.

This sequence belongs to the eIF-3 subunit J family. In terms of assembly, probable component of the eukaryotic translation initiation factor 3 (eIF-3) complex. Is not part of the eIF-3 core complex, with which it is associated in substochiometric amounts.

Its subcellular location is the cytoplasm. Component of the eukaryotic translation initiation factor 3 (eIF-3) complex, which is involved in protein synthesis of a specialized repertoire of mRNAs and, together with other initiation factors, stimulates binding of mRNA and methionyl-tRNAi to the 40S ribosome. The eIF-3 complex specifically targets and initiates translation of a subset of mRNAs involved in cell proliferation. The protein is Eukaryotic translation initiation factor 3 subunit J of Saccharomyces cerevisiae (strain ATCC 204508 / S288c) (Baker's yeast).